The chain runs to 490 residues: ATP synthase subunit beta (490 aa).

173-180 contacts ATP; it reads GGAGVGKT.

Belongs to the ATPase alpha/beta chains family. As to quaternary structure, F-type ATPases have 2 components, CF(1) - the catalytic core - and CF(0) - the membrane proton channel. CF(1) has five subunits: alpha(3), beta(3), gamma(1), delta(1), epsilon(1). CF(0) has three main subunits: a(1), b(2) and c(9-12). The alpha and beta chains form an alternating ring which encloses part of the gamma chain. CF(1) is attached to CF(0) by a central stalk formed by the gamma and epsilon chains, while a peripheral stalk is formed by the delta and b chains.

The protein resides in the cell membrane. The enzyme catalyses ATP + H2O + 4 H(+)(in) = ADP + phosphate + 5 H(+)(out). In terms of biological role, produces ATP from ADP in the presence of a proton gradient across the membrane. The catalytic sites are hosted primarily by the beta subunits. The polypeptide is ATP synthase subunit beta (Bifidobacterium longum subsp. infantis (strain ATCC 15697 / DSM 20088 / JCM 1222 / NCTC 11817 / S12)).